The sequence spans 1023 residues: Sodium/potassium-transporting ATPase subunit alpha-1 (1023 aa).

The propeptide occupies 1–5; it reads MAFKV. A compositionally biased stretch (basic and acidic residues) spans 1 to 11; that stretch reads MAFKVGRDKYE. The interval 1 to 38 is disordered; the sequence is MAFKVGRDKYEPAAVSEQGDKKGKKGKKDRDMDELKKE. Topologically, residues 6–87 are cytoplasmic; that stretch reads GRDKYEPAAV…NALTPPPTTP (82 aa). Residue K9 is modified to N6-acetyllysine. Y10 is modified (phosphotyrosine). S16 is subject to Phosphoserine; by PKC. Position 21 is an N6-acetyllysine (K21). Over residues 28-38 the composition is skewed to basic and acidic residues; that stretch reads KDRDMDELKKE. Residues S40 and S47 each carry the phosphoserine modification. A phosphoinositide-3 kinase binding region spans residues 82–84; that stretch reads PPP. The helical transmembrane segment at 88–108 threads the bilayer; it reads EWIKFCRQLFGGFSMLLWIGA. The Extracellular portion of the chain corresponds to 109–131; sequence ILCFLAYSIQAATEEEPQNDNLY. Residues 132–152 traverse the membrane as a helical segment; that stretch reads LGVVLSAVVIITGCFSYYQEA. The Cytoplasmic portion of the chain corresponds to 153–288; that stretch reads KSSKIMESFK…GGQTPIAAEI (136 aa). Residues 216–235 are disordered; it reads SSLTGESEPQTRSPDFTNEN. A Phosphoserine modification is found at S228. Position 260 is a phosphotyrosine (Y260). Residues 289-308 traverse the membrane as a helical segment; that stretch reads EHFIHIITGVAVFLGVSFFI. The Extracellular segment spans residues 309–320; the sequence is LSLILEYTWLEA. A helical membrane pass occupies residues 321–338; that stretch reads VIFLIGIIVANVPEGLLA. Residues 339–772 lie on the Cytoplasmic side of the membrane; it reads TVTVCLTLTA…EEGRLIFDNL (434 aa). D376 functions as the 4-aspartylphosphate intermediate in the catalytic mechanism. A phosphoserine mark is found at S452 and S484. Residue K487 coordinates ATP. Position 542 is a phosphotyrosine (Y542). The mediates interaction with SCN7A stretch occupies residues 596–717; it reads RAAVPDAVGK…QGAIVAVTGD (122 aa). K661 carries the post-translational modification N6-succinyllysine. S668 and S675 each carry phosphoserine. Mg(2+) contacts are provided by D717 and D721. Residues 773–792 form a helical membrane-spanning segment; sequence KKSIAYTLTSNIPEITPFLI. At 793–802 the chain is on the extracellular side; it reads FIIANIPLPL. A helical transmembrane segment spans residues 803-823; that stretch reads GTVTILCIDLGTDMVPAISLA. At 824–843 the chain is on the cytoplasmic side; it reads YEQAESDIMKRQPRNPKTDK. A helical membrane pass occupies residues 844–866; sequence LVNERLISTAYGQIGMIQALGGF. Topologically, residues 867 to 918 are extracellular; that stretch reads FTYFVILAENGFLPLHLLGLRVDWDDRWINDVEDSYGQQWTYEQRKIVEFTC. Residues 919 to 938 traverse the membrane as a helical segment; it reads HTAFFVSIVVVQWADLVICK. At 939 to 951 the chain is on the cytoplasmic side; sequence TRRNSVFQQGMKN. At S943 the chain carries Phosphoserine; by PKA. The helical transmembrane segment at 952-970 threads the bilayer; that stretch reads KILIFGLFEETALAAFLSY. Topologically, residues 971–985 are extracellular; sequence CPGMGVALRMYPLKP. Residues 986–1006 form a helical membrane-spanning segment; it reads TWWFCAFPYSLLIFVYDEVRK. The Cytoplasmic portion of the chain corresponds to 1007-1023; the sequence is LIIRRRPGGWVEKETYY.

The protein belongs to the cation transport ATPase (P-type) (TC 3.A.3) family. Type IIC subfamily. The sodium/potassium-transporting ATPase is composed of a catalytic alpha subunit, an auxiliary non-catalytic beta subunit and an additional regulatory subunit. Interacts with regulatory subunit FXYD1. Interacts with regulatory subunit FXYD3. Interacts with SIK1. Interacts with SLC35G1 and STIM1. Interacts with CLN3; this interaction regulates the sodium/potassium-transporting ATPase complex localization at the plasma membrane. Interacts with SCN7A; activates ATP1A1 P-type sodium:potassium-exchanging transporter activity which indirectly signals to nearby neurons to regulate sodium homeostasis. Post-translationally, phosphorylation on Tyr-10 modulates pumping activity. Phosphorylation of Ser-943 by PKA modulates the response of ATP1A1 to PKC. Dephosphorylation by protein phosphatase 2A (PP2A) following increases in intracellular sodium, leading to increase catalytic activity.

It localises to the cell membrane. It is found in the basolateral cell membrane. The protein resides in the sarcolemma. Its subcellular location is the cell projection. The protein localises to the axon. It localises to the melanosome. It catalyses the reaction K(+)(out) + Na(+)(in) + ATP + H2O = K(+)(in) + Na(+)(out) + ADP + phosphate + H(+). In terms of biological role, this is the catalytic component of the active enzyme, which catalyzes the hydrolysis of ATP coupled with the exchange of sodium and potassium ions across the plasma membrane. This action creates the electrochemical gradient of sodium and potassium ions, providing the energy for active transport of various nutrients. Could also be part of an osmosensory signaling pathway that senses body-fluid sodium levels and controls salt intake behavior as well as voluntary water intake to regulate sodium homeostasis. The polypeptide is Sodium/potassium-transporting ATPase subunit alpha-1 (ATP1A1) (Pongo abelii (Sumatran orangutan)).